The following is a 383-amino-acid chain: Succinyl-diaminopimelate desuccinylase (383 aa).

Histidine 73 contacts Zn(2+). The active site involves aspartate 75. Aspartate 107 provides a ligand contact to Zn(2+). Glutamate 141 serves as the catalytic Proton acceptor. Positions 142, 170, and 356 each coordinate Zn(2+).

The protein belongs to the peptidase M20A family. DapE subfamily. In terms of assembly, homodimer. Zn(2+) serves as cofactor. It depends on Co(2+) as a cofactor.

The enzyme catalyses N-succinyl-(2S,6S)-2,6-diaminopimelate + H2O = (2S,6S)-2,6-diaminopimelate + succinate. It participates in amino-acid biosynthesis; L-lysine biosynthesis via DAP pathway; LL-2,6-diaminopimelate from (S)-tetrahydrodipicolinate (succinylase route): step 3/3. Functionally, catalyzes the hydrolysis of N-succinyl-L,L-diaminopimelic acid (SDAP), forming succinate and LL-2,6-diaminopimelate (DAP), an intermediate involved in the bacterial biosynthesis of lysine and meso-diaminopimelic acid, an essential component of bacterial cell walls. This chain is Succinyl-diaminopimelate desuccinylase, found in Pseudomonas fluorescens (strain ATCC BAA-477 / NRRL B-23932 / Pf-5).